The primary structure comprises 460 residues: MAKAPKRAFVCNECGADYPRWQGQCSACHAWNTITEVRLAASPTVARNERLSGYAGSAGVSKVQKLSDISLEELPRFSTGFKEFDRVLGGGVVPGSAILIGGNPGAGKSTLLLQTLCKLAEQMKTLYVTGEESLQQVAMRAHRLGLPTANLNMLSETSIEQICLIAEEEQPKLMVIDSIQVMHMADIQSSPGSVAQVRETAAYLTRFAKTRGVAIVMVGHVTKDGSLAGPKVLEHCIDCSVLLDGDADSRFRTLRSHKNRFGAVNELGVFAMTEQGLREVSNPSAIFLSRGDEVTSGSSVMVVWEGTRPLLVEIQALVDHSMMANPRRVAVGLEQNRLAILLAVLHRHGGLQMSDQDVFVNVVGGVKVTETSADLALLLAMVSSLRDRPLPQDLVVFGEVGLAGEIRPVPSGQERISEAAKHGFRRAIVPAANVPKKPPEGMLVFGVKKLADALSVFDDL.

Residues 11–28 form a C4-type zinc finger; the sequence is CNECGADYPRWQGQCSAC. 102–109 contacts ATP; sequence GNPGAGKS. Positions 258–262 match the RadA KNRFG motif motif; that stretch reads KNRFG. The interval 357–460 is lon-protease-like; the sequence is DVFVNVVGGV…ADALSVFDDL (104 aa).

It belongs to the RecA family. RadA subfamily.

Its function is as follows. DNA-dependent ATPase involved in processing of recombination intermediates, plays a role in repairing DNA breaks. Stimulates the branch migration of RecA-mediated strand transfer reactions, allowing the 3' invading strand to extend heteroduplex DNA faster. Binds ssDNA in the presence of ADP but not other nucleotides, has ATPase activity that is stimulated by ssDNA and various branched DNA structures, but inhibited by SSB. Does not have RecA's homology-searching function. This is DNA repair protein RadA from Salmonella typhimurium (strain LT2 / SGSC1412 / ATCC 700720).